Here is a 145-residue protein sequence, read N- to C-terminus: DnaJ homolog subfamily B member 3 (145 aa).

The J domain maps to 1 to 69 (MVDYYEVLDV…KKRDIYDRYG (69 aa)).

Expressed in sperm (at protein level).

Functionally, may operate as a co-chaperone of the male germ cell- and haploid stage-specific Hsp70 proteins. The chain is DnaJ homolog subfamily B member 3 (DNAJB3) from Homo sapiens (Human).